We begin with the raw amino-acid sequence, 152 residues long: Large ribosomal subunit protein bL9 (152 aa).

This sequence belongs to the bacterial ribosomal protein bL9 family.

Functionally, binds to the 23S rRNA. The chain is Large ribosomal subunit protein bL9 from Coxiella burnetii (strain Dugway 5J108-111).